A 225-amino-acid polypeptide reads, in one-letter code: MENLKKLAGIKAAEFVQSGMIVGLGTGSTAYYFVEEIGRRIKEEGLQITAVTTSSVTSKQAEGLGIPLKSIDDVDQVDVTVDGADEVDSAFNGIKGGGGALLMEKVVAVPTKHYIWVVDESKMVEKLGAFKLPVEVVQYGAEQLFRRFERAGYKPAFREKDDQRFVTDMQNFIIDLDLGVIENSVEFAQELDHVVGVVEHGLFNQMVDKVIVAGKSGLQVLEANK.

Substrate is bound by residues 26 to 29 (TGST), 82 to 85 (DGAD), and 95 to 98 (KGGG). The active-site Proton acceptor is glutamate 104. Lysine 122 lines the substrate pocket.

The protein belongs to the ribose 5-phosphate isomerase family. In terms of assembly, homodimer.

The enzyme catalyses aldehydo-D-ribose 5-phosphate = D-ribulose 5-phosphate. It participates in carbohydrate degradation; pentose phosphate pathway; D-ribose 5-phosphate from D-ribulose 5-phosphate (non-oxidative stage): step 1/1. Its function is as follows. Catalyzes the reversible conversion of ribose-5-phosphate to ribulose 5-phosphate. This chain is Ribose-5-phosphate isomerase A, found in Streptococcus sanguinis (strain SK36).